A 551-amino-acid polypeptide reads, in one-letter code: Hydroxylamine reductase (551 aa).

4 residues coordinate [2Fe-2S] cluster: cysteine 3, cysteine 6, cysteine 18, and cysteine 25. Histidine 249, glutamate 273, cysteine 317, cysteine 405, cysteine 433, cysteine 458, glutamate 492, and lysine 494 together coordinate hybrid [4Fe-2O-2S] cluster. Cysteine 405 bears the Cysteine persulfide mark.

This sequence belongs to the HCP family. [2Fe-2S] cluster is required as a cofactor. The cofactor is hybrid [4Fe-2O-2S] cluster.

It is found in the cytoplasm. It carries out the reaction A + NH4(+) + H2O = hydroxylamine + AH2 + H(+). In terms of biological role, catalyzes the reduction of hydroxylamine to form NH(3) and H(2)O. This chain is Hydroxylamine reductase, found in Edwardsiella ictaluri (strain 93-146).